The sequence spans 764 residues: FHF complex subunit HOOK interacting protein 2A (764 aa).

A disordered region spans residues 190–236 (SEDGPKGQDPGSGDVSQCQQPQELSGATGVEPTESEEEPPHQMDDLS). The span at 203-214 (DVSQCQQPQELS) shows a compositional bias: polar residues.

This sequence belongs to the FHIP family.

Functionally, may be required for proper functioning of the nervous system. The chain is FHF complex subunit HOOK interacting protein 2A from Mus musculus (Mouse).